Reading from the N-terminus, the 195-residue chain is Nucleoside triphosphate pyrophosphatase (195 aa).

The Proton acceptor role is filled by Asp-70.

It belongs to the Maf family. It depends on a divalent metal cation as a cofactor.

It localises to the cytoplasm. The catalysed reaction is a ribonucleoside 5'-triphosphate + H2O = a ribonucleoside 5'-phosphate + diphosphate + H(+). The enzyme catalyses a 2'-deoxyribonucleoside 5'-triphosphate + H2O = a 2'-deoxyribonucleoside 5'-phosphate + diphosphate + H(+). Functionally, nucleoside triphosphate pyrophosphatase. May have a dual role in cell division arrest and in preventing the incorporation of modified nucleotides into cellular nucleic acids. This chain is Nucleoside triphosphate pyrophosphatase, found in Synechocystis sp. (strain ATCC 27184 / PCC 6803 / Kazusa).